A 296-amino-acid polypeptide reads, in one-letter code: Small ribosomal subunit biogenesis GTPase RsgA (296 aa).

Positions 63–224 constitute a CP-type G domain; the sequence is RNQLVRPPVA…IADTPGFSSY (162 aa). GTP-binding positions include 112–115 and 167–175; these read SKTD and GQTGAGKST. Zn(2+) contacts are provided by C248, C253, H255, and C261.

The protein belongs to the TRAFAC class YlqF/YawG GTPase family. RsgA subfamily. Monomer. Associates with 30S ribosomal subunit, binds 16S rRNA. Zn(2+) serves as cofactor.

Its subcellular location is the cytoplasm. In terms of biological role, one of several proteins that assist in the late maturation steps of the functional core of the 30S ribosomal subunit. Helps release RbfA from mature subunits. May play a role in the assembly of ribosomal proteins into the subunit. Circularly permuted GTPase that catalyzes slow GTP hydrolysis, GTPase activity is stimulated by the 30S ribosomal subunit. The polypeptide is Small ribosomal subunit biogenesis GTPase RsgA (Limosilactobacillus reuteri (strain DSM 20016) (Lactobacillus reuteri)).